Here is a 241-residue protein sequence, read N- to C-terminus: Sec-independent protein translocase protein TatC (241 aa).

6 consecutive transmembrane segments (helical) span residues 27 to 47 (LIIV…FSAG), 76 to 96 (LTMC…YEAF), 122 to 142 (FVAG…SIVI), 161 to 181 (IVTN…IIVL), 193 to 213 (LVKG…FFSP), and 217 to 237 (LFSQ…SMVL).

It belongs to the TatC family. In terms of assembly, forms a complex with TatA.

It localises to the cell membrane. Functionally, part of the twin-arginine translocation (Tat) system that transports large folded proteins containing a characteristic twin-arginine motif in their signal peptide across membranes. This is Sec-independent protein translocase protein TatC from Methanocella arvoryzae (strain DSM 22066 / NBRC 105507 / MRE50).